We begin with the raw amino-acid sequence, 246 residues long: Probable transcriptional regulatory protein YebC (246 aa).

A disordered region spans residues 1 to 20 (MAGHSKWANTRHRKAAQDAK).

Belongs to the TACO1 family.

It localises to the cytoplasm. This Escherichia coli O6:K15:H31 (strain 536 / UPEC) protein is Probable transcriptional regulatory protein YebC.